A 426-amino-acid polypeptide reads, in one-letter code: Chromatin structure-remodeling complex subunit SFH1 (426 aa).

Serine 78 is modified (phosphoserine). The interval 201-242 is interaction with STH1; the sequence is AIMIPITLDIEHMGHTIKDQFLWNYNDDSISPEEFASIYCKD.

It belongs to the SNF5 family. Interacts directly with STH1. Component of the two forms of the RSC complex composed of at least either RSC1 or RSC2, and ARP7, ARP9, LDB7, NPL6, RSC3, RSC30, RSC4, RSC58, RSC6, RSC8, RSC9, SFH1, STH1, HTL1 and probably RTT102. The complexes interact with histone and histone variant components of centromeric chromatin. Phosphorylated in the G1 phase.

The protein resides in the nucleus. Component of the chromatin structure-remodeling complex (RSC), which is involved in transcription regulation and nucleosome positioning. RSC is responsible for the transfer of a histone octamer from a nucleosome core particle to naked DNA. The reaction requires ATP and involves an activated RSC-nucleosome intermediate. Remodeling reaction also involves DNA translocation, DNA twist and conformational change. As a reconfigurer of centromeric and flanking nucleosomes, RSC complex is required both for proper kinetochore function in chromosome segregation and, via a PKC1-dependent signaling pathway, for organization of the cellular cytoskeleton. This subunit is essential for mitotic growth and required for cell cycle progression. In Saccharomyces cerevisiae (strain ATCC 204508 / S288c) (Baker's yeast), this protein is Chromatin structure-remodeling complex subunit SFH1 (SFH1).